A 402-amino-acid polypeptide reads, in one-letter code: Nodulation protein E (402 aa).

The Ketosynthase family 3 (KS3) domain maps to Asp2–Gln401. Catalysis depends on for beta-ketoacyl synthase activity residues Cys162, His294, and His331. A helical transmembrane segment spans residues His329 to Ile348.

Belongs to the thiolase-like superfamily. Beta-ketoacyl-ACP synthases family.

It localises to the cell inner membrane. Its function is as follows. Proposed to synthesize NOD factor fatty acyl chain. Involved in the synthesis of a highly unsaturated fatty acid moiety, which forms part of a lipo-oligosaccharide that is responsible for host specificity. The chain is Nodulation protein E (nodE) from Rhizobium meliloti (strain 1021) (Ensifer meliloti).